The sequence spans 343 residues: GDP-D-glucose phosphorylase 1 (343 aa).

Catalysis depends on His183, which acts as the Tele-GMP-histidine intermediate.

Belongs to the GDPGP1 family.

Its subcellular location is the cytoplasm. The enzyme catalyses GDP-alpha-D-glucose + phosphate = alpha-D-glucose 1-phosphate + GDP + H(+). Functionally, specific and highly efficient GDP-D-glucose phosphorylase regulating the levels of GDP-D-glucose in cells. This is GDP-D-glucose phosphorylase 1 (gdpgp1) from Danio rerio (Zebrafish).